Reading from the N-terminus, the 415-residue chain is Intron-encoded DNA endonuclease aI3 (415 aa).

Positions 1–81 (MVQRWLYSTN…MPALIGGFGN (81 aa)) are COX1 exons 1 to 3 encoded. A run of 2 helical transmembrane segments spans residues 16-36 (VLYF…SLII) and 57-77 (VLVV…ALIG). Residues 82–415 (QKRYESNNNN…HLKNTYLENK (334 aa)) are COX1 intron 3 encoded.

In the C-terminal section; belongs to the LAGLIDADG endonuclease family. It depends on Mg(2+) as a cofactor. Post-translationally, the mature protein may arise from proteolytic cleavage of an in-frame translation of some COX1 exons plus the intron containing the aI3 open reading frame.

The protein localises to the mitochondrion. It localises to the membrane. Functionally, mitochondrial DNA endonuclease involved in intron homing. It introduces a specific double-strand break in the DNA of the COX1 gene and thus mediates the insertion of an intron, containing its own coding sequence (group I intron), into an intronless gene. Recognizes with high specificity and cleaves the sequence 5'-GGTTTTGGTAACTATTTATTAC-3'. The chain is Intron-encoded DNA endonuclease aI3 (AI3) from Saccharomyces cerevisiae (strain ATCC 204508 / S288c) (Baker's yeast).